Here is a 137-residue protein sequence, read N- to C-terminus: Large-conductance mechanosensitive channel (137 aa).

4 helical membrane-spanning segments follow: residues 9 to 29 (AFAV…GAAF), 32 to 52 (IVSS…IGGV), 54 to 74 (FGDL…VVLA), and 79 to 99 (IQSI…VKVI).

Belongs to the MscL family. In terms of assembly, homopentamer.

Its subcellular location is the cell inner membrane. Channel that opens in response to stretch forces in the membrane lipid bilayer. May participate in the regulation of osmotic pressure changes within the cell. The chain is Large-conductance mechanosensitive channel from Pseudomonas fluorescens (strain ATCC BAA-477 / NRRL B-23932 / Pf-5).